The primary structure comprises 30 residues: Cyclotide hyen-E (30 aa).

Residues 1–30 constitute a cross-link (cyclopeptide (Gly-Asn)); that stretch reads GVPCGESCVYIPCFTGIINCSCRDKVCYNN. 3 disulfides stabilise this stretch: C4–C20, C8–C22, and C13–C27.

Post-translationally, this is a cyclic peptide. As to expression, detected in stems (at protein level).

Functionally, probably participates in a plant defense mechanism. Has cytotoxic activity against HUVEC cells (LC(50)= 2.17 uM) and various cancer cells including HeLa (LC(50)= 3.05 uM), MCF-7 and K562. Displays very weak hemolytic activity. Binds to and induces leakage in phospholipd membranes, particularly ones containing 1-palmitoyl-2-oleophosphatidylethanolamine (POPE). The chain is Cyclotide hyen-E from Pigea enneasperma (Spade flower).